Consider the following 177-residue polypeptide: O-acetyl-ADP-ribose deacetylase (177 aa).

Positions M1 to G175 constitute a Macro domain. Substrate is bound by residues D11 to I12, N25, G33 to D35, and S122 to Y126. Catalysis depends on D35, which acts as the Proton acceptor.

The protein belongs to the MacroD-type family. YmdB subfamily. As to quaternary structure, homodimer. Interacts with RNase III.

The enzyme catalyses 3''-O-acetyl-ADP-D-ribose + H2O = ADP-D-ribose + acetate + H(+). It carries out the reaction 2''-O-acetyl-ADP-D-ribose + H2O = ADP-D-ribose + acetate + H(+). In terms of biological role, deacetylates O-acetyl-ADP ribose to yield ADP-ribose and free acetate. Down-regulates ribonuclease 3 (RNase III) activity. Acts by interacting directly with the region of the ribonuclease that is required for dimerization/activation. The protein is O-acetyl-ADP-ribose deacetylase of Citrobacter rodentium (strain ICC168) (Citrobacter freundii biotype 4280).